The following is a 262-amino-acid chain: Nickel import ATP-binding protein NikD (262 aa).

Positions 6–249 (LAIEGLTATT…PGHEVTRMLV (244 aa)) constitute an ABC transporter domain. An ATP-binding site is contributed by 42 to 49 (GASGSGKS).

Belongs to the ABC transporter superfamily. Nickel importer (TC 3.A.1.5.3) family. In terms of assembly, the complex is composed of two ATP-binding proteins (NikD and NikE), two transmembrane proteins (NikB and NikC) and a solute-binding protein (NikA).

Its subcellular location is the cell inner membrane. It catalyses the reaction Ni(2+)(out) + ATP + H2O = Ni(2+)(in) + ADP + phosphate + H(+). Its function is as follows. Part of the ABC transporter complex NikABCDE involved in nickel import. Responsible for energy coupling to the transport system. This chain is Nickel import ATP-binding protein NikD, found in Brucella suis biovar 1 (strain 1330).